A 213-amino-acid polypeptide reads, in one-letter code: Kiwellin (213 aa).

A signal peptide spans 1–24; the sequence is MAQLSLLVLSLFLTLISLPPPGAS. Intrachain disulfides connect cysteine 28/cysteine 60, cysteine 32/cysteine 44, and cysteine 38/cysteine 49. 4-hydroxyproline is present on residues proline 65 and proline 67. 4 disulfides stabilise this stretch: cysteine 72-cysteine 90, cysteine 80-cysteine 172, cysteine 119-cysteine 144, and cysteine 166-cysteine 182. The interval 91-121 is disordered; sequence SPPVTSSTPAKLTNNDFSEGGDGGGPSECDE. The segment covering 93-107 has biased composition (polar residues); it reads PVTSSTPAKLTNNDF.

This sequence belongs to the kiwellin family. Undergoes proteolytic cleavage by actinidin to produce kissper and KiTH. Three forms of KiTH are produced by cleavage at different sites.

The protein localises to the secreted. Kissper is an anion-selective pore-forming peptide. The protein is Kiwellin of Actinidia chinensis var. chinensis (Chinese soft-hair kiwi).